The primary structure comprises 190 residues: dCTP deaminase, dUMP-forming (190 aa).

Residues Lys-101–Arg-106, Asp-119, Thr-127–Glu-129, Gln-148, Tyr-162, and Gln-174 contribute to the dCTP site. Glu-129 acts as the Proton donor/acceptor in catalysis. The tract at residues Gly-163–Thr-190 is disordered. The segment covering Tyr-171 to Thr-190 has biased composition (polar residues).

The protein belongs to the dCTP deaminase family. In terms of assembly, homotrimer.

The catalysed reaction is dCTP + 2 H2O = dUMP + NH4(+) + diphosphate. It participates in pyrimidine metabolism; dUMP biosynthesis; dUMP from dCTP: step 1/1. Functionally, bifunctional enzyme that catalyzes both the deamination of dCTP to dUTP and the hydrolysis of dUTP to dUMP without releasing the toxic dUTP intermediate. In Mycolicibacterium paratuberculosis (strain ATCC BAA-968 / K-10) (Mycobacterium paratuberculosis), this protein is dCTP deaminase, dUMP-forming.